We begin with the raw amino-acid sequence, 252 residues long: 2-succinyl-6-hydroxy-2,4-cyclohexadiene-1-carboxylate synthase (252 aa).

This sequence belongs to the AB hydrolase superfamily. MenH family. Monomer.

The enzyme catalyses 5-enolpyruvoyl-6-hydroxy-2-succinyl-cyclohex-3-ene-1-carboxylate = (1R,6R)-6-hydroxy-2-succinyl-cyclohexa-2,4-diene-1-carboxylate + pyruvate. The protein operates within quinol/quinone metabolism; 1,4-dihydroxy-2-naphthoate biosynthesis; 1,4-dihydroxy-2-naphthoate from chorismate: step 3/7. It participates in quinol/quinone metabolism; menaquinone biosynthesis. Functionally, catalyzes a proton abstraction reaction that results in 2,5-elimination of pyruvate from 2-succinyl-5-enolpyruvyl-6-hydroxy-3-cyclohexene-1-carboxylate (SEPHCHC) and the formation of 2-succinyl-6-hydroxy-2,4-cyclohexadiene-1-carboxylate (SHCHC). The chain is 2-succinyl-6-hydroxy-2,4-cyclohexadiene-1-carboxylate synthase from Escherichia coli O9:H4 (strain HS).